The following is a 176-amino-acid chain: Tubulin polymerization-promoting protein family member 3 (176 aa).

Position 2 is an N-acetylalanine (Ala2). A disordered region spans residues 132–152 (TGSHKERFDESGKGKGIAGRQ). Residues 134–144 (SHKERFDESGK) are compositionally biased toward basic and acidic residues.

This sequence belongs to the TPPP family. As to expression, expressed in endometrium during the mid-secretory phase (LH + 7) (at protein level).

Its subcellular location is the cytoplasm. It localises to the cytoskeleton. Regulator of microtubule dynamic that has microtubule bundling activity. Required for embryo implantation; possibly by regulating beta-catenin. Also required for decidualization via regulation of beta-catenin. This Homo sapiens (Human) protein is Tubulin polymerization-promoting protein family member 3.